The chain runs to 414 residues: 25-hydroxycholesterol 7-alpha-hydroxylase (414 aa).

A heme-binding site is contributed by C354.

This sequence belongs to the cytochrome P450 family. It depends on heme as a cofactor. Highly expressed in brain; also expressed in liver and kidney.

The protein resides in the endoplasmic reticulum membrane. The protein localises to the microsome membrane. The enzyme catalyses 25-hydroxycholesterol + reduced [NADPH--hemoprotein reductase] + O2 = 7alpha,25-dihydroxycholesterol + oxidized [NADPH--hemoprotein reductase] + H2O + H(+). It carries out the reaction (25R)-cholest-5-ene-3beta,26-diol + reduced [NADPH--hemoprotein reductase] + O2 = (25R)-cholest-5-en-3beta,7alpha,26-triol + oxidized [NADPH--hemoprotein reductase] + H2O + H(+). It functions in the pathway lipid metabolism; bile acid biosynthesis. In terms of biological role, oxysterol 7alpha-hydroxylase that mediates formation of 7-alpha,25-dihydroxycholesterol (7-alpha,25-OHC) from 25-hydroxycholesterol. Plays a key role in cell positioning and movement in lymphoid tissues: 7-alpha,25-dihydroxycholesterol (7-alpha,25-OHC) acts as a ligand for the G protein-coupled receptor GPR183/EBI2, a chemotactic receptor for a number of lymphoid cells. The polypeptide is 25-hydroxycholesterol 7-alpha-hydroxylase (Cyp7b1) (Rattus norvegicus (Rat)).